A 203-amino-acid polypeptide reads, in one-letter code: MAQQEMVTINAELRDVKKKKAMQALREKGSIPAVIYGKGHDNVNLTLSAKEFTKQYKSGALSAHLIELDISGKKEYALVRDIQWHVVKDTVQHVDFQFVDKGSEIKIDIPLSFINESKSPGIKLGGVLNVLCRSITVKCSPEKIPQVIEIDLSGKMIGQSIHINDVKLPEGVKFVAHEEENFTIVTISAADSDVEETQTKTEE.

Belongs to the bacterial ribosomal protein bL25 family. CTC subfamily. Part of the 50S ribosomal subunit; part of the 5S rRNA/L5/L18/L25 subcomplex. Contacts the 5S rRNA. Binds to the 5S rRNA independently of L5 and L18.

Its function is as follows. This is one of the proteins that binds to the 5S RNA in the ribosome where it forms part of the central protuberance. The protein is Large ribosomal subunit protein bL25 of Wolbachia pipientis subsp. Culex pipiens (strain wPip).